Reading from the N-terminus, the 139-residue chain is Coat protein TP2 (139 aa).

The protein localises to the virion. The chain is Coat protein TP2 from Thermoproteus tenax virus 1 (strain KRA1) (TTV1).